An 88-amino-acid polypeptide reads, in one-letter code: DNA-directed RNA polymerase subunit omega (88 aa).

The protein belongs to the RNA polymerase subunit omega family. In terms of assembly, the RNAP catalytic core consists of 2 alpha, 1 beta, 1 beta' and 1 omega subunit. When a sigma factor is associated with the core the holoenzyme is formed, which can initiate transcription.

The enzyme catalyses RNA(n) + a ribonucleoside 5'-triphosphate = RNA(n+1) + diphosphate. In terms of biological role, promotes RNA polymerase assembly. Latches the N- and C-terminal regions of the beta' subunit thereby facilitating its interaction with the beta and alpha subunits. The sequence is that of DNA-directed RNA polymerase subunit omega from Kineococcus radiotolerans (strain ATCC BAA-149 / DSM 14245 / SRS30216).